Here is a 540-residue protein sequence, read N- to C-terminus: Esterase B1 (540 aa).

A disulfide bridge connects residues Cys68 and Cys81. The active-site Acyl-ester intermediate is Ser191. Catalysis depends on charge relay system residues Glu324 and His442. A glycan (N-linked (GlcNAc...) asparagine) is linked at Asn452.

This sequence belongs to the type-B carboxylesterase/lipase family.

It catalyses the reaction a carboxylic ester + H2O = an alcohol + a carboxylate + H(+). Overproduction of nonspecific esterases is a common mechanism of resistance to organophosphate insecticides. In Culex pipiens (House mosquito), this protein is Esterase B1 (B1).